Here is a 183-residue protein sequence, read N- to C-terminus: Ankyrin repeat domain-containing protein 39 (183 aa).

ANK repeat units lie at residues 30 to 59 (DFER…DPSQ), 63 to 92 (AGYT…KCDA), 96 to 125 (GGAT…NPRV), and 129 to 158 (DGMT…ALKA). A Phosphoserine modification is found at S153.

It belongs to the ANKRD39 family.

In Homo sapiens (Human), this protein is Ankyrin repeat domain-containing protein 39 (ANKRD39).